A 435-amino-acid polypeptide reads, in one-letter code: Glutamyl-tRNA reductase (435 aa).

Substrate contacts are provided by residues 49–52 (TCNR), Ser-109, 114–116 (ETQ), and Gln-120. The Nucleophile role is filled by Cys-50. 189-194 (GAGEMS) is an NADP(+) binding site.

The protein belongs to the glutamyl-tRNA reductase family. As to quaternary structure, homodimer.

The enzyme catalyses (S)-4-amino-5-oxopentanoate + tRNA(Glu) + NADP(+) = L-glutamyl-tRNA(Glu) + NADPH + H(+). It participates in porphyrin-containing compound metabolism; protoporphyrin-IX biosynthesis; 5-aminolevulinate from L-glutamyl-tRNA(Glu): step 1/2. Its function is as follows. Catalyzes the NADPH-dependent reduction of glutamyl-tRNA(Glu) to glutamate 1-semialdehyde (GSA). The sequence is that of Glutamyl-tRNA reductase from Listeria monocytogenes serotype 4b (strain CLIP80459).